The sequence spans 109 residues: T cell receptor alpha variable 26-1 (109 aa).

Positions 1 to 19 (MRLVARVTVFLTFGTIIDA) are cleaved as a signal peptide. Residues 20–109 (KTTQPTSMDC…TAVYYCIVRV (90 aa)) form the Ig-like domain. Cysteine 39 and cysteine 105 are oxidised to a cystine. 2 N-linked (GlcNAc...) asparagine glycosylation sites follow: asparagine 40 and asparagine 71.

Alpha-beta TR is a heterodimer composed of an alpha and beta chain; disulfide-linked. The alpha-beta TR is associated with the transmembrane signaling CD3 coreceptor proteins to form the TR-CD3 (TcR or TCR). The assembly of alpha-beta TR heterodimers with CD3 occurs in the endoplasmic reticulum where a single alpha-beta TR heterodimer associates with one CD3D-CD3E heterodimer, one CD3G-CD3E heterodimer and one CD247 homodimer forming a stable octameric structure. CD3D-CD3E and CD3G-CD3E heterodimers preferentially associate with TR alpha and TR beta chains, respectively. The association of the CD247 homodimer is the last step of TcR assembly in the endoplasmic reticulum and is required for transport to the cell surface.

It localises to the cell membrane. In terms of biological role, v region of the variable domain of T cell receptor (TR) alpha chain that participates in the antigen recognition. Alpha-beta T cell receptors are antigen specific receptors which are essential to the immune response and are present on the cell surface of T lymphocytes. Recognize peptide-major histocompatibility (MH) (pMH) complexes that are displayed by antigen presenting cells (APC), a prerequisite for efficient T cell adaptive immunity against pathogens. Binding of alpha-beta TR to pMH complex initiates TR-CD3 clustering on the cell surface and intracellular activation of LCK that phosphorylates the ITAM motifs of CD3G, CD3D, CD3E and CD247 enabling the recruitment of ZAP70. In turn ZAP70 phosphorylates LAT, which recruits numerous signaling molecules to form the LAT signalosome. The LAT signalosome propagates signal branching to three major signaling pathways, the calcium, the mitogen-activated protein kinase (MAPK) kinase and the nuclear factor NF-kappa-B (NF-kB) pathways, leading to the mobilization of transcription factors that are critical for gene expression and essential for T cell growth and differentiation. The T cell repertoire is generated in the thymus, by V-(D)-J rearrangement. This repertoire is then shaped by intrathymic selection events to generate a peripheral T cell pool of self-MH restricted, non-autoaggressive T cells. Post-thymic interaction of alpha-beta TR with the pMH complexes shapes TR structural and functional avidity. The sequence is that of T cell receptor alpha variable 26-1 from Homo sapiens (Human).